The following is a 4493-amino-acid chain: Mucin-17 (4493 aa).

Positions 1–25 (MPRPGTMALCLLTLVLSLLPPQAAA) are cleaved as a signal peptide. Over 26 to 4393 (EQDLSVNRAV…QGTQKSLVYG (4368 aa)) the chain is Extracellular. The segment covering 88–105 (NPEMTSIESSVTSDTPGV) has biased composition (polar residues). Disordered regions lie at residues 88-159 (NPEM…SISS), 188-223 (LTTSTQASSSPTTPESTTIPKSTNSEGSTPLTSMPA), 248-277 (TISAQASSSPTTAEGPSLSNSAPSGGSTPL), and 306-344 (VITSTEASSSPTTAEGTSIPTSTYTEGSTPLTSTPASTM). A compositionally biased stretch (low complexity) spans 106 to 146 (SSTRMTPTESRTTSESTSDSTTLFPSSTEDTSSPTTPEGTD). The span at 148–159 (PMSTPSEESISS) shows a compositional bias: polar residues. Repeat copies occupy residues 185–245 (STPL…EIST), 246–300 (PVTI…TTPA), 301–361 (ATNI…PVDT), 362–418 (STLV…TIPV), 420–477 (SKTF…TTPV), 479–538 (SKTQ…PVDT), 539–597 (STPV…PADS), 598–654 (NTFV…TTPV), 656–715 (SNTP…PVDT), 716–774 (STPV…PLDT), 775–831 (STHI…TTPV), 833–892 (SNSP…PVDT), 893–951 (STPV…PVDT), 952–1010 (STPV…PVDS), 1011–1069 (NTPL…PADT), 1070–1121 (STPV…ASTL), 1122–1187 (STTP…PVDS), 1188–1246 (KTQV…PVDT), 1247–1305 (STPV…PVDT), 1306–1364 (KGPV…PVDN), 1365–1423 (STPV…PVDT), 1424–1482 (STPG…PVDS), 1483–1541 (NSPV…PAVT), 1542–1600 (STPV…PIDS), 1601–1656 (KTQV…TTPV), 1658–1717 (SNSP…PVDN), 1718–1776 (STPV…PIDT), 1777–1835 (STPV…PVDS), 1836–1895 (NSPV…AVTS), 1896–1951 (TPVT…TTLA), 1953–2012 (TRTP…PVDT), 2013–2071 (STPA…PVDS), 2072–2127 (KTQV…TTPV), 2129–2188 (SNSP…PVDT), 2189–2247 (STPV…PVDT), 2248–2306 (STPV…PVDS), 2307–2365 (NTPF…PADT), 2366–2424 (STPV…PVDT), 2425–2483 (STPV…PVDT), 2484–2540 (STPM…TTPV), 2542–2601 (SNSP…PVDT), 2602–2653 (SIPV…ASTL), 2654–2719 (STTP…PVDT), 2720–2770 (STPV…EAST), 2772–2837 (STTA…PVDT), 2838–2896 (STPV…PVDT), 2897–2955 (SIPV…PVDT), 2956–3014 (RTPV…PADT), 3015–3073 (STPV…PVDS), 3074–3132 (NSPV…PVDT), 3133–3191 (STPV…PVDT), 3192–3247 (STPV…TTPV), 3249–3308 (SNTP…PADT), 3309–3367 (STPV…PVDT), 3368–3426 (STPV…PVDS), 3427–3485 (NTLV…PVDT), and 3486–3544 (STPV…PVDS). Positions 185–3727 (STPLTTSTQA…SVVTSTPVTT (3543 aa)) are 59 X approximate tandem repeats. The span at 188–210 (LTTSTQASSSPTTPESTTIPKST) shows a compositional bias: low complexity. Polar residues predominate over residues 211–223 (NSEGSTPLTSMPA). A compositionally biased stretch (low complexity) spans 308–323 (TSTEASSSPTTAEGTS). Polar residues predominate over residues 324 to 344 (IPTSTYTEGSTPLTSTPASTM). Residues 425-441 (TTASEASSSPTTAEDTS) show a composition bias toward low complexity. Disordered stretches follow at residues 425–629 (TTAS…ERGT), 644–868 (SEAS…TPLT), 886–1104 (STTP…TPLT), 1116–1163 (SEAS…TPLA), 1175–1279 (SEAN…GSTL), and 1296–1338 (STLL…GRTP). A compositionally biased stretch (polar residues) spans 442–483 (IATSTPSEGSTPLTSMPVSTTPVASSEASNLSTTPVDSKTQV). N-linked (GlcNAc...) asparagine glycosylation is present at N471. Residues 484-497 (TTSTEASSSPPTAE) show a composition bias toward low complexity. A compositionally biased stretch (polar residues) spans 498-528 (VNSMPTSTPSEGSTPLTSMSVSTMPVASSEA). Low complexity-rich tracts occupy residues 529–573 (STLS…TPLT) and 584–618 (SSEASTTSTTPADSNTFVTTSSEASSSSTTAEGTS). Polar residues-rich tracts occupy residues 619-629 (MPTSTYSERGT) and 644-660 (SEASTLSTTPVDSNTPV). A compositionally biased stretch (low complexity) spans 661-677 (TTSTEATSSSTTAEGTS). Polar residues predominate over residues 678-705 (MPTSTYTEGSTPLTSMPVNTTLVASSEA). An N-linked (GlcNAc...) asparagine glycan is attached at N696. Over residues 706-733 (STLSTTPVDTSTPVTTSTEASSSPTTAD) the composition is skewed to low complexity. Positions 737–754 (MPTSTPSEGSTPLTSMPV) are enriched in polar residues. Low complexity predominate over residues 755-776 (SKTLLTSSEASTLSTTPLDTST). Residues 777–832 (HITTSTEASCSPTTTEGTSMPISTPSEGSPLLTSIPVSITPVTSPEASTLSTTPVD) are compositionally biased toward polar residues. Residues 833 to 849 (SNSPVTTSTEVSSSPTP) are compositionally biased toward low complexity. Residues 854–868 (SMPTSTYSEGRTPLT) are compositionally biased toward polar residues. The span at 886-900 (STTPVDTSTPVTNST) shows a compositional bias: low complexity. An N-linked (GlcNAc...) asparagine glycan is attached at N898. Positions 901-944 (EARSSPTTSEGTSMPTSTPGEGSTPLTSMPDSTTPVVSSEARTL) are enriched in polar residues. Over residues 945–972 (SATPVDTSTPVTTSTEATSSPTTAEGTS) the composition is skewed to low complexity. Residues 973-1011 (IPTSTPSEGTTPLTSTPVSHTLVANSEASTLSTTPVDSN) show a composition bias toward polar residues. Low complexity predominate over residues 1012 to 1021 (TPLTTSTEAS). Residues 1029–1062 (GTSMPTSTPSEGSTPLTRMPVSTTMVASSETSTL) show a composition bias toward polar residues. The span at 1063 to 1090 (STTPADTSTPVTTYSQASSSSTTADGTS) shows a compositional bias: low complexity. Polar residues-rich tracts occupy residues 1091-1104 (MPTSTYSEGSTPLT) and 1116-1132 (SEASTLSTTPVDTSIPV). Positions 1133–1149 (TTSTEASSSPTTAEGTS) are enriched in low complexity. Composition is skewed to polar residues over residues 1175–1198 (SEANTLSTTPVDSKTQVATSTEAS) and 1205–1222 (EVTSMPTSTPGERSTPLT). Low complexity predominate over residues 1237 to 1279 (STLSTSPVDTSTPVTTSAETSSSPTTAEGTSLPTSTTSEGSTL). 2 stretches are compositionally biased toward polar residues: residues 1310–1320 (VTSNEVSSSPT) and 1326–1338 (SMPTSTYSEGRTP). N1345 is a glycosylation site (N-linked (GlcNAc...) asparagine). The segment covering 1360-1394 (TPVDNSTPVTTSTEACSSPTTSEGTSMPNSNPSEG) has biased composition (polar residues). 20 disordered regions span residues 1360–1516 (TPVD…STAL), 1537–1575 (TPAVTSTPVTTYSQASSSPTTADGTSMQTSTYSEGSTPL), 1590–1930 (ANTL…PLTS), 1947–2163 (STTL…RTPL), 2177–2281 (AIST…TTPL), 2295–2501 (EVST…TTAE), 2524–2630 (TTPV…TPSE), 2647–2693 (SSEA…RSTP), 2709–2751 (ASTL…DGST), 2765–2853 (SSEA…SPTT), 2879–2925 (TPVA…TPSE), 2942–3167 (GSEA…TPLT), 3182–3577 (STLS…GSSS), 3589–3635 (TSSE…EVST), 3667–3701 (ITSTQVSSSPVTPEGTTMPIWTPSEGSTPLTTMPV), 3785–3812 (MTTASEGSSSPTTLEGTTTMPMSTTSER), 3829–3849 (PSEASTLSTPPGDTSTPLLTS), 3892–3914 (ASIASTPPLDTSTTFTPSTDTAS), 3965–3988 (VITSTELNTPSTSSSSTTTSFSTT), and 4008–4129 (STAP…TPTV). Low complexity-rich tracts occupy residues 1395-1415 (TTPLTSIPVSTTPVVSSEAST) and 1423-1442 (TSTPGTTSAEATSSPTTAEG). Polar residues predominate over residues 1461–1483 (PVSNTPVANSEASTLSTTPVDSN). A compositionally biased stretch (low complexity) spans 1484-1499 (SPVVTSTAVSSSPTPA). The segment covering 1504-1516 (IAISTPSEGSTAL) has biased composition (polar residues). The segment covering 1537–1547 (TPAVTSTPVTT) has biased composition (low complexity). Composition is skewed to polar residues over residues 1548–1575 (YSQASSSPTTADGTSMQTSTYSEGSTPL) and 1590–1604 (ANTLSTTPIDSKTQV). Positions 1605 to 1620 (TASTEASSSTTAEGSS) are enriched in low complexity. Composition is skewed to polar residues over residues 1621-1673 (MTIS…SSPT) and 1679-1775 (SMPT…TPID). Residues 1776–1797 (TSTPVTTSTEATSSPTTAEGTS) are compositionally biased toward low complexity. Residues 1798 to 1836 (IPTSTLSEGMTPLTSTPVSHTLVANSEASTLSTTPVDSN) are compositionally biased toward polar residues. Over residues 1837 to 1852 (SPVVTSTAVSSSPTPA) the composition is skewed to low complexity. The segment covering 1856–1883 (SIATSTPSEGSTALTSIPVSTTTVASSE) has biased composition (polar residues). Low complexity predominate over residues 1884–1900 (TNTLSTTPAVTSTPVTT). Polar residues-rich tracts occupy residues 1901–1921 (YAQVSSSPTTADGSSMPTSTP) and 1947–1976 (STTLADTRTPVTTYSQASSSPTTADGTSMP). The segment covering 1984 to 2033 (STPLTSMPLSTTLVVSSEASTLSTTPVDTSTPATTSTEGSSSPTTAGGTS) has biased composition (low complexity). 2 stretches are compositionally biased toward polar residues: residues 2034–2043 (IQTSTPSERT) and 2051–2077 (VSTTLVVSSEGNTLSTTPVDSKTQVTN). N2077 is a glycosylation site (N-linked (GlcNAc...) asparagine). Residues 2078–2091 (STEASSSATAEGSS) show a composition bias toward low complexity. Polar residues predominate over residues 2092-2156 (MTISAPSEGS…EGTSMQTSTY (65 aa)). The segment covering 2177–2196 (AISTLSTTPVDTSTPVTNST) has biased composition (low complexity). N2194 carries N-linked (GlcNAc...) asparagine glycosylation. Residues 2197-2240 (EARSSPTTSEGTSMPTSTPSEGSTPFTSMPVSTMPVVTSEASTL) are compositionally biased toward polar residues. Residues 2241-2268 (SATPVDTSTPVTTSTEATSSPTTAEGTS) show a composition bias toward low complexity. 2 stretches are compositionally biased toward polar residues: residues 2269-2281 (IPTSTLSEGTTPL) and 2295-2307 (EVSTLSTTPVDSN). Low complexity predominate over residues 2308 to 2317 (TPFTTSTEAS). Polar residues predominate over residues 2325–2358 (GTSMPTSTSSEGNTPLTRMPVSTTMVASFETSTL). Over residues 2359–2371 (STTPADTSTPVTT) the composition is skewed to low complexity. Residues 2372–2395 (YSQAGSSPTTADDTSMPTSTYSEG) are compositionally biased toward polar residues. 2 stretches are compositionally biased toward low complexity: residues 2396 to 2445 (STPL…EGTS) and 2462 to 2499 (PVSTTPVVSSEAGTLSTTPVDTSTPMTTSTEASSSPTT). Positions 2524-2547 (TTPVASPEASTLSTTPVDSNSPVV) are enriched in polar residues. Residues 2548–2563 (TSTEISSSATSAEGTS) are compositionally biased toward low complexity. Over residues 2564–2576 (MPTSTYSEGSTPL) the composition is skewed to polar residues. The span at 2586–2617 (LASSEASTLSTTPVDTSIPVTTSTETSSSPTT) shows a compositional bias: low complexity. The segment covering 2618–2628 (AKDTSMPISTP) has biased composition (polar residues). A compositionally biased stretch (low complexity) spans 2654-2681 (STTPVDTRTLVTTSTGTSSSPTTAEGSS). The segment covering 2682 to 2693 (MPTSTPGERSTP) has biased composition (polar residues). The segment covering 2710 to 2740 (STLSTTPVDTSTPVTTSAEASSSPTTAEGTS) has biased composition (low complexity). Over residues 2741-2751 (MRISTPSDGST) the composition is skewed to polar residues. 2 stretches are compositionally biased toward low complexity: residues 2765 to 2816 (SSEA…TSMP) and 2829 to 2853 (TLSTTPVDTSTPVTTSTKASSSPTT). The span at 2879 to 2900 (TPVASSEASTLSTTPVDTSIPV) shows a compositional bias: polar residues. 2 stretches are compositionally biased toward low complexity: residues 2901–2917 (TTSTEGSSSPTTAEGTS) and 2950–2976 (TTPVDTRTPVTTSAEASSSPTTAEGTS). Over residues 2988 to 3009 (PLTSMSVSTMPVASSEASTLSR) the composition is skewed to polar residues. Residues 3010-3031 (TPADTSTPVTTSTEASSSPTTA) are compositionally biased toward low complexity. Positions 3037–3057 (PISTPSEGSTPLTSIPVSTTP) are enriched in polar residues. Low complexity-rich tracts occupy residues 3073–3089 (SNSPVVTSTEVSSSPTP) and 3104–3140 (STPLTGVPVSTTPVTSSAISTLSTTPVDTSTPVTTST). Residues 3141–3166 (EAHSSPTTSEGTSMPTSTPSEGSTPL) show a composition bias toward polar residues. Over residues 3185–3211 (SATPVDTSTPVTTSTEATSSTTAEGTS) the composition is skewed to low complexity. The span at 3212-3253 (IPTSTPSEGMTPLTSVPVSNTPVASSEASILSTTPVDSNTPL) shows a compositional bias: polar residues. A compositionally biased stretch (low complexity) spans 3254-3267 (TTSTEASSSPPTAE). A compositionally biased stretch (polar residues) spans 3268-3288 (GTSMPTSTPSEGSTPLTSMPV). Over residues 3289–3314 (STTTVASSETSTLSTTPADTSTPVTT) the composition is skewed to low complexity. Residues 3329-3357 (SMPTSTYSEGSTPLTNMSFSTTPVVSSEA) show a composition bias toward polar residues. A glycan (N-linked (GlcNAc...) asparagine) is linked at N3344. A compositionally biased stretch (low complexity) spans 3358-3375 (STLSTTPVDTSTPVTTST). Residues 3376–3401 (EASLSPTTAEGTSIPTSSPSEGTTPL) are compositionally biased toward polar residues. Residues 3405–3414 (PVSTTPVVSS) show a composition bias toward low complexity. Polar residues-rich tracts occupy residues 3415–3441 (EVNTLSTTPVDSNTLVTTSTEASSSPT) and 3447–3475 (SLPTSTTSEGSTPLSIMPLSTTPVASSEA). Low complexity predominate over residues 3476 to 3501 (STLSTTPVDTSTPVTTSSPTNSSPTT). Polar residues-rich tracts occupy residues 3502–3549 (AEVT…TFVT) and 3558–3571 (PATLQVTTMRMSTP). A compositionally biased stretch (low complexity) spans 3589–3616 (TSSEASTPSTPSVDRSTPVTTSTQSNST). Repeat copies occupy residues 3604–3662 (STPV…PVDT) and 3663–3727 (STPV…PVTT). Positions 3626-3635 (PMSTPSEVST) are enriched in polar residues. Residues 3667-3679 (ITSTQVSSSPVTP) show a composition bias toward low complexity. Polar residues-rich tracts occupy residues 3690-3701 (SEGSTPLTTMPV) and 3785-3806 (MTTASEGSSSPTTLEGTTTMPM). Composition is skewed to low complexity over residues 3967-3988 (TSTELNTPSTSSSSTTTSFSTT), 4008-4083 (STAP…SSTT), and 4090-4129 (TTMTTRTKPSTRTTSFPTVTTTAVPTNTTIKSNPTSTPTV). The N-linked (GlcNAc...) asparagine glycan is linked to N4116. Residues 4131–4170 (RTTTCFGDGCQNTASRCKNGGTWDGLKCQCPNLYYGELCE) form the EGF-like domain. Disulfide bonds link C4135–C4147, C4140–C4158, and C4160–C4169. In terms of domain architecture, SEA spans 4184-4291 (ISAQMELTVT…QQIMINDICS (108 aa)). Residues N4205, N4236, N4267, N4297, and N4305 are each glycosylated (N-linked (GlcNAc...) asparagine). The helical transmembrane segment at 4394 to 4414 (LVGAGVVLMLIILVALLMLVF) threads the bilayer. Residues 4415–4493 (RSKREVKRQK…QRPQVMTTSF (79 aa)) are Cytoplasmic-facing.

Interacts via its C-terminus with PDZK1 and this interaction appears important for proper localization. Post-translationally, probably cleaved within the SEA domain. In terms of processing, N-glycosylated. Contains high mannose and complex-type glycans. The forms containing the complex type glycans localize to the cell surface. Not O-glycosylated. As to expression, expressed almost exclusively in the intestine. Expression is especially high in both the duodenum and transverse colon. Expressed in mature absorptive cells of the small intestinal villi. No expression is detected in goblet cells. Highly expressed in pancreatic adenocarcinoma tissue (at protein level). Expression is not detectable in normal pancreas, in pancreatitis or in cell lines derived from other cancers.

It is found in the cell membrane. Its subcellular location is the secreted. Its function is as follows. Probably plays a role in maintaining homeostasis on mucosal surfaces. This is Mucin-17 (MUC17) from Homo sapiens (Human).